Reading from the N-terminus, the 549-residue chain is MKNINPTQTSAWQALQKHYDEMKDVTIAELFANDSDRFAKFSATFDDLMLVDFSKNRITEETLAKLQDLAKETDLAGAIKSMFSGEKINRTEDRAVLHVALRNRSNTPIIVDGKDVMPEVNAVLEKMKTFSQAIISGQWKGYTGKAITDVVNIGIGGSDLGPFMVTEALRPYKNHLTMHFVSNVDGTHIAEVLKKVNPETTLFLVASKTFTTQETMTNAHSARDWFLKTAGDEKHVAKHFAALSTNAKAVGEFGIDTANMFEFWDWVGGRYSLWSAIGLSIILSVGFDNFVELLSGAHAMDKHFSTTPAEKNLPILLALIGIWYNNFFGAETEAILPYDQYMHRFAAYFQQGNMESNGKYVDRNGNAVDYQTGPIIWGEPGTNGQHAFYQLIHQGTKMVPCDFIAPAITHNPLSDHHQKLLSNFFAQTEALAFGKSREVVEQEYRDQGKDPAQLEHVVPFKVFEGNRPTNSILLREITPFSLGALIALYEHKIFTQGAILNIFTFDQWGVELGKQLANRILPELGDDKAISSHDSSTNGLINRYKAWRA.

E355 serves as the catalytic Proton donor. Active-site residues include H386 and K514.

The protein belongs to the GPI family.

It is found in the cytoplasm. The enzyme catalyses alpha-D-glucose 6-phosphate = beta-D-fructose 6-phosphate. It functions in the pathway carbohydrate biosynthesis; gluconeogenesis. Its pathway is carbohydrate degradation; glycolysis; D-glyceraldehyde 3-phosphate and glycerone phosphate from D-glucose: step 2/4. Catalyzes the reversible isomerization of glucose-6-phosphate to fructose-6-phosphate. This is Glucose-6-phosphate isomerase from Salmonella enteritidis PT4 (strain P125109).